The following is a 211-amino-acid chain: Thiamine-phosphate synthase (211 aa).

Residues 37–41 and Asn69 each bind 4-amino-2-methyl-5-(diphosphooxymethyl)pyrimidine; that span reads QLRIK. Mg(2+) contacts are provided by Asp70 and Asp89. Position 108 (Ser108) interacts with 4-amino-2-methyl-5-(diphosphooxymethyl)pyrimidine. 134–136 lines the 2-[(2R,5Z)-2-carboxy-4-methylthiazol-5(2H)-ylidene]ethyl phosphate pocket; sequence TQT. 4-amino-2-methyl-5-(diphosphooxymethyl)pyrimidine is bound at residue Lys137. 2-[(2R,5Z)-2-carboxy-4-methylthiazol-5(2H)-ylidene]ethyl phosphate-binding positions include Gly166 and 186–187; that span reads VS.

The protein belongs to the thiamine-phosphate synthase family. Mg(2+) serves as cofactor.

It carries out the reaction 2-[(2R,5Z)-2-carboxy-4-methylthiazol-5(2H)-ylidene]ethyl phosphate + 4-amino-2-methyl-5-(diphosphooxymethyl)pyrimidine + 2 H(+) = thiamine phosphate + CO2 + diphosphate. The catalysed reaction is 2-(2-carboxy-4-methylthiazol-5-yl)ethyl phosphate + 4-amino-2-methyl-5-(diphosphooxymethyl)pyrimidine + 2 H(+) = thiamine phosphate + CO2 + diphosphate. The enzyme catalyses 4-methyl-5-(2-phosphooxyethyl)-thiazole + 4-amino-2-methyl-5-(diphosphooxymethyl)pyrimidine + H(+) = thiamine phosphate + diphosphate. It functions in the pathway cofactor biosynthesis; thiamine diphosphate biosynthesis; thiamine phosphate from 4-amino-2-methyl-5-diphosphomethylpyrimidine and 4-methyl-5-(2-phosphoethyl)-thiazole: step 1/1. Condenses 4-methyl-5-(beta-hydroxyethyl)thiazole monophosphate (THZ-P) and 2-methyl-4-amino-5-hydroxymethyl pyrimidine pyrophosphate (HMP-PP) to form thiamine monophosphate (TMP). The protein is Thiamine-phosphate synthase of Salmonella dublin (strain CT_02021853).